A 181-amino-acid chain; its full sequence is Ribonuclease M5 (181 aa).

Positions K3–K86 constitute a Toprim domain. The Mg(2+) site is built by E9, D55, and D57.

This sequence belongs to the ribonuclease M5 family. Mg(2+) serves as cofactor.

The protein resides in the cytoplasm. The enzyme catalyses Endonucleolytic cleavage of RNA, removing 21 and 42 nucleotides, respectively, from the 5'- and 3'-termini of a 5S-rRNA precursor.. Required for correct processing of both the 5' and 3' ends of 5S rRNA precursor. Cleaves both sides of a double-stranded region yielding mature 5S rRNA in one step. The protein is Ribonuclease M5 of Clostridium botulinum (strain Hall / ATCC 3502 / NCTC 13319 / Type A).